The following is a 1039-amino-acid chain: L-arabinokinase (1039 aa).

The chain crosses the membrane as a helical span at residues 662–678; it reads AAYVAGTILVLMIELGV. 693-703 is an ATP binding site; the sequence is PEGKGVSSSAA. Aspartate 745 acts as the Proton acceptor in catalysis.

The protein belongs to the GHMP kinase family.

The protein localises to the membrane. The catalysed reaction is L-arabinose + ATP = beta-L-arabinose 1-phosphate + ADP + H(+). Functionally, arabinose kinase. Involved in the salvage pathway which converts free L-arabinose to UDP-L-arabinose. May play a role in arabinose transport. In Arabidopsis thaliana (Mouse-ear cress), this protein is L-arabinokinase (ARA1).